The sequence spans 283 residues: Bifunctional protein FolD (283 aa).

Residues 166–168, S191, and I232 each bind NADP(+); that span reads GAS.

This sequence belongs to the tetrahydrofolate dehydrogenase/cyclohydrolase family. In terms of assembly, homodimer.

The catalysed reaction is (6R)-5,10-methylene-5,6,7,8-tetrahydrofolate + NADP(+) = (6R)-5,10-methenyltetrahydrofolate + NADPH. It catalyses the reaction (6R)-5,10-methenyltetrahydrofolate + H2O = (6R)-10-formyltetrahydrofolate + H(+). It participates in one-carbon metabolism; tetrahydrofolate interconversion. Its function is as follows. Catalyzes the oxidation of 5,10-methylenetetrahydrofolate to 5,10-methenyltetrahydrofolate and then the hydrolysis of 5,10-methenyltetrahydrofolate to 10-formyltetrahydrofolate. The polypeptide is Bifunctional protein FolD (Chromobacterium violaceum (strain ATCC 12472 / DSM 30191 / JCM 1249 / CCUG 213 / NBRC 12614 / NCIMB 9131 / NCTC 9757 / MK)).